A 235-amino-acid polypeptide reads, in one-letter code: 2,3-bisphosphoglycerate-dependent phosphoglycerate mutase (235 aa).

Substrate-binding positions include 8-15 (RHGESIWN), 21-22 (TG), arginine 58, 110-113 (ERYY), lysine 121, 137-138 (RR), and 181-182 (GN). Histidine 9 (tele-phosphohistidine intermediate) is an active-site residue. Glutamate 110 serves as the catalytic Proton donor/acceptor.

Belongs to the phosphoglycerate mutase family. BPG-dependent PGAM subfamily.

It catalyses the reaction (2R)-2-phosphoglycerate = (2R)-3-phosphoglycerate. It participates in carbohydrate degradation; glycolysis; pyruvate from D-glyceraldehyde 3-phosphate: step 3/5. In terms of biological role, catalyzes the interconversion of 2-phosphoglycerate and 3-phosphoglycerate. The chain is 2,3-bisphosphoglycerate-dependent phosphoglycerate mutase from Methanococcus vannielii (strain ATCC 35089 / DSM 1224 / JCM 13029 / OCM 148 / SB).